Here is a 188-residue protein sequence, read N- to C-terminus: Putative manganese efflux pump MntP (188 aa).

6 helical membrane passes run 3–23, 41–61, 62–82, 107–129, 143–163, and 168–188; these read LSATILLAFGMSMDAFAASIG, LIFGAIETLTPLVGWGLGMLA, SQFILEWNHWIAFILLVFLGG, LLVTTAFATSLDAMAVGVGLAFL, ATFIMSTLGMMVGRFIGPLLG, and ILGGIVLIGIGSEILWSHFAG.

This sequence belongs to the MntP (TC 9.B.29) family.

It localises to the cell inner membrane. Functionally, probably functions as a manganese efflux pump. The protein is Putative manganese efflux pump MntP of Klebsiella pneumoniae subsp. pneumoniae (strain ATCC 700721 / MGH 78578).